Reading from the N-terminus, the 102-residue chain is Nucleoid-associated protein WIGBR5260 (102 aa).

The protein belongs to the YbaB/EbfC family. Homodimer.

Its subcellular location is the cytoplasm. The protein resides in the nucleoid. In terms of biological role, binds to DNA and alters its conformation. May be involved in regulation of gene expression, nucleoid organization and DNA protection. This chain is Nucleoid-associated protein WIGBR5260, found in Wigglesworthia glossinidia brevipalpis.